The sequence spans 305 residues: Oxygen-dependent coproporphyrinogen-III oxidase (305 aa).

Ser-92 is a substrate binding site. A divalent metal cation-binding residues include His-96 and His-106. Residue His-106 is the Proton donor of the active site. 108–110 (NVR) contributes to the substrate binding site. A divalent metal cation is bound by residues His-145 and His-175. Positions 239 to 274 (YVEFNLLFDRGTLFGLQSGGRAESILISLPPLVRWE) are important for dimerization. A substrate-binding site is contributed by 257-259 (GGR).

Belongs to the aerobic coproporphyrinogen-III oxidase family. As to quaternary structure, homodimer. A divalent metal cation serves as cofactor.

It localises to the cytoplasm. It carries out the reaction coproporphyrinogen III + O2 + 2 H(+) = protoporphyrinogen IX + 2 CO2 + 2 H2O. It participates in porphyrin-containing compound metabolism; protoporphyrin-IX biosynthesis; protoporphyrinogen-IX from coproporphyrinogen-III (O2 route): step 1/1. Involved in the heme biosynthesis. Catalyzes the aerobic oxidative decarboxylation of propionate groups of rings A and B of coproporphyrinogen-III to yield the vinyl groups in protoporphyrinogen-IX. The protein is Oxygen-dependent coproporphyrinogen-III oxidase of Xylella fastidiosa (strain Temecula1 / ATCC 700964).